We begin with the raw amino-acid sequence, 128 residues long: Aspartate 1-decarboxylase (128 aa).

The Schiff-base intermediate with substrate; via pyruvic acid role is filled by S25. S25 carries the post-translational modification Pyruvic acid (Ser). T57 contributes to the substrate binding site. Y58 acts as the Proton donor in catalysis. 73–75 (GSA) is a binding site for substrate.

This sequence belongs to the PanD family. In terms of assembly, heterooctamer of four alpha and four beta subunits. Requires pyruvate as cofactor. Is synthesized initially as an inactive proenzyme, which is activated by self-cleavage at a specific serine bond to produce a beta-subunit with a hydroxyl group at its C-terminus and an alpha-subunit with a pyruvoyl group at its N-terminus.

Its subcellular location is the cytoplasm. The enzyme catalyses L-aspartate + H(+) = beta-alanine + CO2. It functions in the pathway cofactor biosynthesis; (R)-pantothenate biosynthesis; beta-alanine from L-aspartate: step 1/1. Its function is as follows. Catalyzes the pyruvoyl-dependent decarboxylation of aspartate to produce beta-alanine. The sequence is that of Aspartate 1-decarboxylase from Burkholderia ambifaria (strain ATCC BAA-244 / DSM 16087 / CCUG 44356 / LMG 19182 / AMMD) (Burkholderia cepacia (strain AMMD)).